The primary structure comprises 455 residues: MSSSGLNSEKVAALIQKLNSDPQFVLAQNVGTTHDLLDICLKRATVQRAQHVFQHAVPQEGKPITNQKSSGRCWIFSCLNVMRLPFMKKLNIEEFEFSQSYLFFWDKVERCYFFLSAFVDTAQRKEPEDGRLVQFLLMNPANDGGQWDMLVNIVEKYGVIPKKCFPESYTTEATRRMNDILNHKMREFCIRLRNLVHSGATKGEISATQDVMMEEIFRVVCICLGNPPETFTWEYRDKDKNYQKIGPITPLEFYREHVKPLFNMEDKICLVNDPRPQHKYNKLYTVEYLSNMVGGRKTLYNNQPIDFLKKMVAASIKDGEAVWFGCDVGKHFNSKLGLSDMNLYDHELVFGVSLKNMNKAERLTFGESLMTHAMTFTAVSEKDDQDGAFTKWRVENSWGEDHGHKGYLCMTDEWFSEYVYEVVVDRKHVPEEVLAVLEQEPIILPAWDPMGALAE.

Position 1 is an N-acetylmethionine (Met-1). Catalysis depends on residues Cys-73 and His-372. Lys-391 bears the N6-acetyllysine mark. The active site involves Asn-396.

It belongs to the peptidase C1 family. As to quaternary structure, homohexamer. Interacts with NUDT12 (via ANK repeats).

It localises to the cytoplasm. It is found in the cytoplasmic granule. It carries out the reaction Inactivates bleomycin B2 (a cytotoxic glycometallopeptide) by hydrolysis of a carboxyamide bond of beta-aminoalanine, but also shows general aminopeptidase activity. The specificity varies somewhat with source, but amino acid arylamides of Met, Leu and Ala are preferred.. Its function is as follows. The normal physiological role of BLM hydrolase is unknown, but it catalyzes the inactivation of the antitumor drug BLM (a glycopeptide) by hydrolyzing the carboxamide bond of its B-aminoalaninamide moiety thus protecting normal and malignant cells from BLM toxicity. This is Bleomycin hydrolase (BLMH) from Homo sapiens (Human).